Reading from the N-terminus, the 270-residue chain is Putative hydro-lyase ACIAD2519 (270 aa).

It belongs to the D-glutamate cyclase family.

The chain is Putative hydro-lyase ACIAD2519 from Acinetobacter baylyi (strain ATCC 33305 / BD413 / ADP1).